Reading from the N-terminus, the 74-residue chain is uncharacterized protein (74 aa).

The helical transmembrane segment at 54 to 72 threads the bilayer; that stretch reads LIIPRFLLLIYSVIQCLFL.

It is found in the membrane. This is an uncharacterized protein from Saccharomyces cerevisiae (strain ATCC 204508 / S288c) (Baker's yeast).